A 123-amino-acid polypeptide reads, in one-letter code: Small ribosomal subunit protein uS13 (123 aa).

The tract at residues 96–123 is disordered; the sequence is LPVRGQRTKTNARTRKGPKKTVGARRKK.

This sequence belongs to the universal ribosomal protein uS13 family. In terms of assembly, part of the 30S ribosomal subunit. Forms a loose heterodimer with protein S19. Forms two bridges to the 50S subunit in the 70S ribosome.

Located at the top of the head of the 30S subunit, it contacts several helices of the 16S rRNA. In the 70S ribosome it contacts the 23S rRNA (bridge B1a) and protein L5 of the 50S subunit (bridge B1b), connecting the 2 subunits; these bridges are implicated in subunit movement. Contacts the tRNAs in the A and P-sites. The chain is Small ribosomal subunit protein uS13 from Desulforamulus reducens (strain ATCC BAA-1160 / DSM 100696 / MI-1) (Desulfotomaculum reducens).